We begin with the raw amino-acid sequence, 142 residues long: Large ribosomal subunit protein uL11 (142 aa).

The protein belongs to the universal ribosomal protein uL11 family. As to quaternary structure, part of the ribosomal stalk of the 50S ribosomal subunit. Interacts with L10 and the large rRNA to form the base of the stalk. L10 forms an elongated spine to which L12 dimers bind in a sequential fashion forming a multimeric L10(L12)X complex. One or more lysine residues are methylated.

Its function is as follows. Forms part of the ribosomal stalk which helps the ribosome interact with GTP-bound translation factors. The sequence is that of Large ribosomal subunit protein uL11 from Akkermansia muciniphila (strain ATCC BAA-835 / DSM 22959 / JCM 33894 / BCRC 81048 / CCUG 64013 / CIP 107961 / Muc).